A 389-amino-acid polypeptide reads, in one-letter code: Lipid-A-disaccharide synthase (389 aa).

The protein belongs to the LpxB family.

It carries out the reaction a lipid X + a UDP-2-N,3-O-bis[(3R)-3-hydroxyacyl]-alpha-D-glucosamine = a lipid A disaccharide + UDP + H(+). The protein operates within bacterial outer membrane biogenesis; LPS lipid A biosynthesis. Condensation of UDP-2,3-diacylglucosamine and 2,3-diacylglucosamine-1-phosphate to form lipid A disaccharide, a precursor of lipid A, a phosphorylated glycolipid that anchors the lipopolysaccharide to the outer membrane of the cell. The sequence is that of Lipid-A-disaccharide synthase from Paraburkholderia xenovorans (strain LB400).